The following is a 204-amino-acid chain: Probable GTP-binding protein EngB (204 aa).

The 176-residue stretch at 22 to 197 (GFPEIAFVGR…LAEFDNVLSI (176 aa)) folds into the EngB-type G domain. Residues 30–37 (GRSNVGKS), 57–61 (GKTRQ), 75–78 (DLPG), 144–147 (NKVD), and 176–178 (FSA) contribute to the GTP site. Mg(2+) is bound by residues serine 37 and threonine 59.

Belongs to the TRAFAC class TrmE-Era-EngA-EngB-Septin-like GTPase superfamily. EngB GTPase family. Mg(2+) is required as a cofactor.

Its function is as follows. Necessary for normal cell division and for the maintenance of normal septation. This is Probable GTP-binding protein EngB from Ruminiclostridium cellulolyticum (strain ATCC 35319 / DSM 5812 / JCM 6584 / H10) (Clostridium cellulolyticum).